A 347-amino-acid chain; its full sequence is Cytosolic sulfotransferase 14 (347 aa).

Residue 87–92 participates in 3'-phosphoadenylyl sulfate binding; sequence KSGTTW. Histidine 155 functions as the Proton acceptor in the catalytic mechanism. 3'-phosphoadenylyl sulfate is bound by residues arginine 177, serine 185, tyrosine 244, and 310–312; that span reads RKG.

The protein belongs to the sulfotransferase 1 family.

Its subcellular location is the cytoplasm. Its function is as follows. Sulfotransferase that utilizes 3'-phospho-5'-adenylyl sulfate (PAPS) as sulfonate donor. Not active with 11-hydroxyjasmonate or 12-hydroxyjasmonate. The protein is Cytosolic sulfotransferase 14 (SOT14) of Arabidopsis thaliana (Mouse-ear cress).